We begin with the raw amino-acid sequence, 340 residues long: DNA-directed RNA polymerase subunit alpha (340 aa).

An alpha N-terminal domain (alpha-NTD) region spans residues 1–233 (MIRDEISVST…DLFIPFLRAE (233 aa)). The segment at 268-340 (AFKHIFIDQS…DLPKNKFQIH (73 aa)) is alpha C-terminal domain (alpha-CTD).

This sequence belongs to the RNA polymerase alpha chain family. In terms of assembly, in plastids the minimal PEP RNA polymerase catalytic core is composed of four subunits: alpha, beta, beta', and beta''. When a (nuclear-encoded) sigma factor is associated with the core the holoenzyme is formed, which can initiate transcription.

It localises to the plastid. Its subcellular location is the chloroplast. It catalyses the reaction RNA(n) + a ribonucleoside 5'-triphosphate = RNA(n+1) + diphosphate. Its function is as follows. DNA-dependent RNA polymerase catalyzes the transcription of DNA into RNA using the four ribonucleoside triphosphates as substrates. In Cycas taitungensis (Prince sago), this protein is DNA-directed RNA polymerase subunit alpha.